A 375-amino-acid chain; its full sequence is Tyrosine--tRNA ligase (375 aa).

L-tyrosine is bound by residues tyrosine 37, tyrosine 168, glutamine 172, aspartate 175, and glutamine 190. Residues 251 to 255 (KMSKS) carry the 'KMSKS' region motif. Lysine 254 provides a ligand contact to ATP.

The protein belongs to the class-I aminoacyl-tRNA synthetase family. TyrS type 4 subfamily. As to quaternary structure, homodimer.

Its subcellular location is the cytoplasm. The enzyme catalyses tRNA(Tyr) + L-tyrosine + ATP = L-tyrosyl-tRNA(Tyr) + AMP + diphosphate + H(+). In terms of biological role, catalyzes the attachment of tyrosine to tRNA(Tyr) in a two-step reaction: tyrosine is first activated by ATP to form Tyr-AMP and then transferred to the acceptor end of tRNA(Tyr). This is Tyrosine--tRNA ligase from Pyrococcus horikoshii (strain ATCC 700860 / DSM 12428 / JCM 9974 / NBRC 100139 / OT-3).